The primary structure comprises 826 residues: Leucine--tRNA ligase (826 aa).

Positions 41-51 match the 'HIGH' region motif; that stretch reads PYPSGKLHMGH. The short motif at 586-590 is the 'KMSKS' region element; the sequence is KMSKS. An ATP-binding site is contributed by lysine 589.

It belongs to the class-I aminoacyl-tRNA synthetase family.

It localises to the cytoplasm. The catalysed reaction is tRNA(Leu) + L-leucine + ATP = L-leucyl-tRNA(Leu) + AMP + diphosphate. In Natranaerobius thermophilus (strain ATCC BAA-1301 / DSM 18059 / JW/NM-WN-LF), this protein is Leucine--tRNA ligase.